The sequence spans 298 residues: N-acetylmuramic acid 6-phosphate etherase (298 aa).

The region spanning 55–218 (IHAQVSGGGR…STGLMIKSGK (164 aa)) is the SIS domain. The Proton donor role is filled by Glu83. Glu114 is a catalytic residue.

It belongs to the GCKR-like family. MurNAc-6-P etherase subfamily. In terms of assembly, homodimer.

It carries out the reaction N-acetyl-D-muramate 6-phosphate + H2O = N-acetyl-D-glucosamine 6-phosphate + (R)-lactate. The protein operates within amino-sugar metabolism; 1,6-anhydro-N-acetylmuramate degradation. It participates in amino-sugar metabolism; N-acetylmuramate degradation. Its pathway is cell wall biogenesis; peptidoglycan recycling. Functionally, specifically catalyzes the cleavage of the D-lactyl ether substituent of MurNAc 6-phosphate, producing GlcNAc 6-phosphate and D-lactate. Together with AnmK, is also required for the utilization of anhydro-N-acetylmuramic acid (anhMurNAc) either imported from the medium or derived from its own cell wall murein, and thus plays a role in cell wall recycling. This is N-acetylmuramic acid 6-phosphate etherase from Escherichia coli O8 (strain IAI1).